The chain runs to 374 residues: Translocating chain-associated membrane protein 1 (374 aa).

Residues 1 to 32 are Cytoplasmic-facing; that stretch reads MAIRKKSNKNPPVLSHEFVLQNHADIVSCLAM. A helical membrane pass occupies residues 33–53; the sequence is LFLLGLMFEITAKGAIIFVAL. The Lumenal segment spans residues 54 to 81; the sequence is QYNVTRPATEEQAAESASLYYYGIKDLA. A glycan (N-linked (GlcNAc...) asparagine) is linked at asparagine 56. Residues 82 to 102 form a helical membrane-spanning segment; that stretch reads TVFFYMLVAIIVHAIIQEYVL. The Cytoplasmic segment spans residues 103 to 121; the sequence is DKINRRMHFSKTKHSKFNE. The 210-residue stretch at 117 to 326 folds into the TLC domain; the sequence is SKFNESGQLS…NFQLRRWREH (210 aa). The chain crosses the membrane as a helical span at residues 122–142; it reads SGQLSAFYLFACVWGTFILVS. Topologically, residues 143–159 are lumenal; that stretch reads ENYISDPTILWRAYPHN. A helical transmembrane segment spans residues 160–180; sequence LMTFQMKFFYISQLAYWLHAF. The Cytoplasmic segment spans residues 181–192; sequence PELYFQKTKKED. Residues 193 to 213 traverse the membrane as a helical segment; it reads IPRQLVYIGLYLFHIAGAYLL. Residue asparagine 214 is a topological domain, lumenal. A helical membrane pass occupies residues 215–235; sequence LNHLGLVLLVLHYFVEFLFHI. The Cytoplasmic segment spans residues 236-251; the sequence is SRLFYFSDEKYQKGFS. Residues 252 to 272 traverse the membrane as a helical segment; it reads LWAVLFVLGRLLTLILSVLTV. Topologically, residues 273–297 are lumenal; sequence GFGLARAENQKLDFSTGNFNVLAVR. A helical membrane pass occupies residues 298-318; it reads IAVLASICITQAFMMWKFINF. The Cytoplasmic portion of the chain corresponds to 319–374; sequence QLRRWREHSAFQAPPVKRKPAVTKGRSSRKGTENGVNGTVTSNGADSPRSRKEKSS. The interval 333–374 is disordered; sequence PVKRKPAVTKGRSSRKGTENGVNGTVTSNGADSPRSRKEKSS. Residues 334–347 are compositionally biased toward basic residues; sequence VKRKPAVTKGRSSR. Polar residues predominate over residues 352–363; it reads NGVNGTVTSNGA. Residue serine 365 is modified to Phosphoserine.

Belongs to the TRAM family. Interacts with SEC61B. May interact with Derlin-1/DERL1. Post-translationally, N-glycosylated.

The protein resides in the endoplasmic reticulum membrane. Involved in the translocation of nascent protein chains into or through the endoplasmic reticulum (ER) membrane by facilitating the proper chain positioning at the SEC61 channel. Regulates the exposure of nascent secretory protein chain to the cytosol during translocation into the ER. May affect the phospholipid bilayer in the vicinity of the lateral gate of the SEC61 channel, thereby facilitating ER protein transport. Intimately associates with transmembrane (TM) domain of nascent membrane proteins during the entire integration process into the ER membrane. Associates with the second TM domain of G-protein-coupled receptor opsin/OPSD nascent chain in the ER membrane, which may facilitate its integration into the membrane. Under conditions of ER stress, participates in the disposal of misfolded ER membrane proteins during the unfolded protein response (UPR), an integrated stress response (ISR) pathway, by selectively retrotranslocating misfolded ER-membrane proteins from the ER into the cytosol where they are ubiquitinated and degraded by the proteasome. The chain is Translocating chain-associated membrane protein 1 from Rattus norvegicus (Rat).